A 347-amino-acid polypeptide reads, in one-letter code: Terpene synthase 2 (347 aa).

Aspartate 103, asparagine 247, serine 251, and glutamate 255 together coordinate Mg(2+). A D(D/E)XX(D/E) motif motif is present at residues 103-107 (DDLLE). Residues 247-255 (NDIFSLKKE) carry the NSE motif motif. A WxxxxxRY motif motif is present at residues 329–336 (WCSKSTRY).

This sequence belongs to the terpene synthase family. Requires Mg(2+) as cofactor.

Terpene synthase that may be involved in the production of volatile terpenoids. Does not show detectable terpene products with either farnesyl diphosphate (FPP) or geranyl diphosphate (GPP). P.polycephalum has a unique biology and these volatile terpenoids could function in internal communication of P.polycephalum, to mark the territory that have been explored, or they may be involved in chemotaxis. The polypeptide is Terpene synthase 2 (Physarum polycephalum (Slime mold)).